The primary structure comprises 315 residues: 4-hydroxy-3-methylbut-2-enyl diphosphate reductase (315 aa).

Position 12 (Cys-12) interacts with [4Fe-4S] cluster. 2 residues coordinate (2E)-4-hydroxy-3-methylbut-2-enyl diphosphate: His-41 and His-74. 2 residues coordinate dimethylallyl diphosphate: His-41 and His-74. His-41 and His-74 together coordinate isopentenyl diphosphate. Cys-96 is a binding site for [4Fe-4S] cluster. His-124 is a (2E)-4-hydroxy-3-methylbut-2-enyl diphosphate binding site. Residue His-124 participates in dimethylallyl diphosphate binding. Isopentenyl diphosphate is bound at residue His-124. The active-site Proton donor is the Glu-126. Residue Thr-168 coordinates (2E)-4-hydroxy-3-methylbut-2-enyl diphosphate. Residue Cys-198 participates in [4Fe-4S] cluster binding. 4 residues coordinate (2E)-4-hydroxy-3-methylbut-2-enyl diphosphate: Ser-226, Ser-227, Asn-228, and Ser-270. Positions 226, 227, 228, and 270 each coordinate dimethylallyl diphosphate. Residues Ser-226, Ser-227, Asn-228, and Ser-270 each contribute to the isopentenyl diphosphate site.

The protein belongs to the IspH family. It depends on [4Fe-4S] cluster as a cofactor.

The catalysed reaction is isopentenyl diphosphate + 2 oxidized [2Fe-2S]-[ferredoxin] + H2O = (2E)-4-hydroxy-3-methylbut-2-enyl diphosphate + 2 reduced [2Fe-2S]-[ferredoxin] + 2 H(+). It carries out the reaction dimethylallyl diphosphate + 2 oxidized [2Fe-2S]-[ferredoxin] + H2O = (2E)-4-hydroxy-3-methylbut-2-enyl diphosphate + 2 reduced [2Fe-2S]-[ferredoxin] + 2 H(+). The protein operates within isoprenoid biosynthesis; dimethylallyl diphosphate biosynthesis; dimethylallyl diphosphate from (2E)-4-hydroxy-3-methylbutenyl diphosphate: step 1/1. It functions in the pathway isoprenoid biosynthesis; isopentenyl diphosphate biosynthesis via DXP pathway; isopentenyl diphosphate from 1-deoxy-D-xylulose 5-phosphate: step 6/6. Functionally, catalyzes the conversion of 1-hydroxy-2-methyl-2-(E)-butenyl 4-diphosphate (HMBPP) into a mixture of isopentenyl diphosphate (IPP) and dimethylallyl diphosphate (DMAPP). Acts in the terminal step of the DOXP/MEP pathway for isoprenoid precursor biosynthesis. The polypeptide is 4-hydroxy-3-methylbut-2-enyl diphosphate reductase (Azotobacter vinelandii (strain DJ / ATCC BAA-1303)).